Here is a 120-residue protein sequence, read N- to C-terminus: Large ribosomal subunit protein bL12 (120 aa).

The protein belongs to the bacterial ribosomal protein bL12 family. As to quaternary structure, homodimer. Part of the ribosomal stalk of the 50S ribosomal subunit. Forms a multimeric L10(L12)X complex, where L10 forms an elongated spine to which 2 to 4 L12 dimers bind in a sequential fashion. Binds GTP-bound translation factors.

In terms of biological role, forms part of the ribosomal stalk which helps the ribosome interact with GTP-bound translation factors. Is thus essential for accurate translation. The chain is Large ribosomal subunit protein bL12 from Brevibacillus brevis (strain 47 / JCM 6285 / NBRC 100599).